The sequence spans 828 residues: DNA gyrase subunit A (828 aa).

The Topo IIA-type catalytic domain occupies 32-497; it reads LPDVRDGLKP…EVLSLEDEDL (466 aa). Tyr120 acts as the O-(5'-phospho-DNA)-tyrosine intermediate in catalysis. Residues 524-530 carry the GyrA-box motif; sequence QKRGGRG.

It belongs to the type II topoisomerase GyrA/ParC subunit family. Heterotetramer, composed of two GyrA and two GyrB chains. In the heterotetramer, GyrA contains the active site tyrosine that forms a transient covalent intermediate with DNA, while GyrB binds cofactors and catalyzes ATP hydrolysis.

It is found in the cytoplasm. It catalyses the reaction ATP-dependent breakage, passage and rejoining of double-stranded DNA.. Its function is as follows. A type II topoisomerase that negatively supercoils closed circular double-stranded (ds) DNA in an ATP-dependent manner to modulate DNA topology and maintain chromosomes in an underwound state. Negative supercoiling favors strand separation, and DNA replication, transcription, recombination and repair, all of which involve strand separation. Also able to catalyze the interconversion of other topological isomers of dsDNA rings, including catenanes and knotted rings. Type II topoisomerases break and join 2 DNA strands simultaneously in an ATP-dependent manner. In Streptococcus pyogenes serotype M1, this protein is DNA gyrase subunit A.